We begin with the raw amino-acid sequence, 350 residues long: Biotin synthase (350 aa).

In terms of domain architecture, Radical SAM core spans 54 to 278; it reads REIQLSTLLS…TMPQSYVRLS (225 aa). The [4Fe-4S] cluster site is built by cysteine 69, cysteine 73, and cysteine 76. 4 residues coordinate [2Fe-2S] cluster: cysteine 113, cysteine 144, cysteine 204, and arginine 276.

Belongs to the radical SAM superfamily. Biotin synthase family. In terms of assembly, homodimer. It depends on [4Fe-4S] cluster as a cofactor. Requires [2Fe-2S] cluster as cofactor.

It carries out the reaction (4R,5S)-dethiobiotin + (sulfur carrier)-SH + 2 reduced [2Fe-2S]-[ferredoxin] + 2 S-adenosyl-L-methionine = (sulfur carrier)-H + biotin + 2 5'-deoxyadenosine + 2 L-methionine + 2 oxidized [2Fe-2S]-[ferredoxin]. It functions in the pathway cofactor biosynthesis; biotin biosynthesis; biotin from 7,8-diaminononanoate: step 2/2. Functionally, catalyzes the conversion of dethiobiotin (DTB) to biotin by the insertion of a sulfur atom into dethiobiotin via a radical-based mechanism. In Neisseria meningitidis serogroup A / serotype 4A (strain DSM 15465 / Z2491), this protein is Biotin synthase.